A 224-amino-acid chain; its full sequence is Ribosomal RNA small subunit methyltransferase G (224 aa).

S-adenosyl-L-methionine contacts are provided by residues Gly69, Leu74, 119–120 (AE), and Arg137.

This sequence belongs to the methyltransferase superfamily. RNA methyltransferase RsmG family.

It localises to the cytoplasm. Specifically methylates the N7 position of guanine in position 518 of 16S rRNA. The chain is Ribosomal RNA small subunit methyltransferase G from Mycobacterium bovis (strain ATCC BAA-935 / AF2122/97).